The sequence spans 473 residues: Photosystem II CP43 reaction center protein (473 aa).

A propeptide spanning residues Met-1–Glu-14 is cleaved from the precursor. An N-acetylthreonine modification is found at Thr-15. The residue at position 15 (Thr-15) is a Phosphothreonine. 5 helical membrane-spanning segments follow: residues Leu-69 to Ala-93, Leu-134 to Asn-155, Lys-178 to Thr-200, Lys-255 to Ser-275, and Trp-291 to Ala-312. Glu-367 contacts [CaMn4O5] cluster. The chain crosses the membrane as a helical span at residues Arg-447–Pro-471.

This sequence belongs to the PsbB/PsbC family. PsbC subfamily. As to quaternary structure, PSII is composed of 1 copy each of membrane proteins PsbA, PsbB, PsbC, PsbD, PsbE, PsbF, PsbH, PsbI, PsbJ, PsbK, PsbL, PsbM, PsbT, PsbX, PsbY, PsbZ, Psb30/Ycf12, at least 3 peripheral proteins of the oxygen-evolving complex and a large number of cofactors. It forms dimeric complexes. The cofactor is Binds multiple chlorophylls and provides some of the ligands for the Ca-4Mn-5O cluster of the oxygen-evolving complex. It may also provide a ligand for a Cl- that is required for oxygen evolution. PSII binds additional chlorophylls, carotenoids and specific lipids..

It is found in the plastid. The protein localises to the chloroplast thylakoid membrane. One of the components of the core complex of photosystem II (PSII). It binds chlorophyll and helps catalyze the primary light-induced photochemical processes of PSII. PSII is a light-driven water:plastoquinone oxidoreductase, using light energy to abstract electrons from H(2)O, generating O(2) and a proton gradient subsequently used for ATP formation. In Physcomitrium patens (Spreading-leaved earth moss), this protein is Photosystem II CP43 reaction center protein.